Here is a 549-residue protein sequence, read N- to C-terminus: MAFVFYCFLQVLVSWVIHAVQPFCLPECTCSEESFGRSLQCMSMSLGKIPDNFPEELKQVRIENSPLFELSQGFFTNMSSLEYLWLNFNNVTVIHLGALEDLPELRELRLEGNKLRSVPWTAFRATPLLRVLDLKHNRIDSVPELALQFLTNLIYLDISSNRLTVVSKGVFLNWPAYQKRQQLGCGAEFLSNMVLSLHNNPWLCDCRLRGLAQFVKSVGPPFILVNSYLVCQGPVSKAGQLLHETELGVCMKPTISTPSVNVTIQVGKNVTLQCFAQASPSPTIAWKYPLSTWREFDVLASPIAEGIILSQLVIPAAQLVDGGNYTCMAFNSIGRSSLVILLYVQPAQAMPGLHFLSTSSEVSAYVDLRVVKQTVHGILLQWLTVTNLAEEQWFTLYITSDEALRKKVVHIGPGINTYAVDDLLPATKYKACLSLRNQPPSQGQCVVFVTGKDSGGLEGREHLLHVTVVLCAVLLALPVGAYVWVSQGPYNFSEWCWRRCPLHRKTLRCPQAVPQCKDNSFKDPSGVYEDGESHRVMEEDEEVEKEGIS.

An N-terminal signal peptide occupies residues 1 to 22; it reads MAFVFYCFLQVLVSWVIHAVQP. One can recognise an LRRNT domain in the interval 23–54; it reads FCLPECTCSEESFGRSLQCMSMSLGKIPDNFP. LRR repeat units lie at residues 80 to 103, 104 to 125, 128 to 149, and 152 to 173; these read SLEY…EDLP, ELRE…AFRA, LLRV…ALQF, and NLIY…VFLN. N-linked (GlcNAc...) asparagine glycosylation occurs at Asn90. The 53-residue stretch at 200-252 folds into the LRRCT domain; it reads NPWLCDCRLRGLAQFVKSVGPPFILVNSYLVCQGPVSKAGQLLHETELGVCMK. In terms of domain architecture, Ig-like spans 253 to 339; it reads PTISTPSVNV…FNSIGRSSLV (87 aa). The N-linked (GlcNAc...) asparagine glycan is linked to Asn261. Cys274 and Cys327 are joined by a disulfide. Residues 361–447 enclose the Fibronectin type-III domain; it reads EVSAYVDLRV…QPPSQGQCVV (87 aa). Residues 463–483 traverse the membrane as a helical segment; the sequence is LLHVTVVLCAVLLALPVGAYV. The N-linked (GlcNAc...) asparagine glycan is linked to Asn491. Positions 521–549 are disordered; sequence FKDPSGVYEDGESHRVMEEDEEVEKEGIS. Residues 538–549 show a composition bias toward acidic residues; that stretch reads EEDEEVEKEGIS.

As to quaternary structure, interacts with LRIT1; may form a heterodimer with LRIT1.

It localises to the membrane. This chain is Leucine-rich repeat, immunoglobulin-like domain and transmembrane domain-containing protein 2 (Lrit2), found in Mus musculus (Mouse).